The sequence spans 357 residues: DNA replication and repair protein RecF (357 aa).

ATP is bound at residue 30 to 37 (GANGSGKT).

Belongs to the RecF family.

It localises to the cytoplasm. The RecF protein is involved in DNA metabolism; it is required for DNA replication and normal SOS inducibility. RecF binds preferentially to single-stranded, linear DNA. It also seems to bind ATP. The sequence is that of DNA replication and repair protein RecF from Salmonella arizonae (strain ATCC BAA-731 / CDC346-86 / RSK2980).